The sequence spans 360 residues: Hydroxycarboxylic acid receptor 2 (360 aa).

Topologically, residues 1 to 30 (MSKQNHFLVINGKNCCVFRDENIAKVLPPV) are extracellular. A helical transmembrane segment spans residues 31 to 51 (LGLEFVFGLLGNGLALWIFCF). Residues 52–60 (HLKSWKSSR) lie on the Cytoplasmic side of the membrane. The chain crosses the membrane as a helical span at residues 61-81 (IFLFNLAVADFLLIICLPFLT). The Extracellular segment spans residues 82-98 (DNYVQNWDWRFGSIPCR). A disulfide bond links Cys97 and Cys174. Residues 99–119 (VMLFMLAMNRQGSIIFLTVVA) form a helical membrane-spanning segment. The Cytoplasmic segment spans residues 120-140 (VDRYFRVVHPHHFLNKISNRT). A helical membrane pass occupies residues 141–161 (AAIISCFLWGITIGLTVHLLY). The Extracellular portion of the chain corresponds to 162–189 (TDMMTRNGDANLCSSFSICYTFRWHDAM). Residues 190–210 (FLLEFFLPLGIILFCSGRIIW) form a helical membrane-spanning segment. At 211-226 (SLRQRQMDRHVKIKRA) the chain is on the cytoplasmic side. The helical transmembrane segment at 227-247 (INFIMVVAIVFVICFLPSVAV) threads the bilayer. The Extracellular portion of the chain corresponds to 248-270 (RIRIFWLLYKHNVRNCDIYSSVD). The helical transmembrane segment at 271-291 (LAFFTTLSFTYMNSMLDPVVY) threads the bilayer. Over 292-360 (YFSSPSFPNF…SPPYLASTSR (69 aa)) the chain is Cytoplasmic. A disordered region spans residues 320–360 (NNRSTSVELTGDPSTIRSIPGALMTDPSEPGSPPYLASTSR). A compositionally biased stretch (polar residues) spans 321–336 (NRSTSVELTGDPSTIR). Residue Ser325 is modified to Phosphoserine.

It belongs to the G-protein coupled receptor 1 family. Expressed in adipose tissue, lung and spleen.

The protein resides in the cell membrane. Its function is as follows. Acts as a high affinity receptor for both nicotinic acid (also known as niacin) and (D)-beta-hydroxybutyrate and mediates increased adiponectin secretion and decreased lipolysis through G(i)-protein-mediated inhibition of adenylyl cyclase. This pharmacological effect requires nicotinic acid doses that are much higher than those provided by a normal diet. Mediates nicotinic acid-induced apoptosis in mature neutrophils. Receptor activation by nicotinic acid results in reduced cAMP levels which may affect activity of cAMP-dependent protein kinase A and phosphorylation of target proteins, leading to neutrophil apoptosis. The rank order of potency for the displacement of nicotinic acid binding is 5-methyl pyrazole-3-carboxylic acid = pyridine-3-acetic acid &gt; acifran &gt; 5-methyl nicotinic acid = acipimox &gt;&gt; nicotinuric acid = nicotinamide. The sequence is that of Hydroxycarboxylic acid receptor 2 (Hcar2) from Rattus norvegicus (Rat).